Consider the following 145-residue polypeptide: Actin-related protein 4A (145 aa).

Positions 47–66 are disordered; the sequence is IDDAANTTEDAKESDKEKGK. Basic and acidic residues predominate over residues 55-64; it reads EDAKESDKEK.

This sequence belongs to the actin family. ARP4 subfamily. As to expression, expressed in roots, leaves and flowers.

In Arabidopsis thaliana (Mouse-ear cress), this protein is Actin-related protein 4A (ARP4A).